Consider the following 239-residue polypeptide: Glucosamine-6-phosphate deaminase (239 aa).

Asp62 functions as the Proton acceptor; for enolization step in the catalytic mechanism. Asn128 functions as the For ring-opening step in the catalytic mechanism. His130 functions as the Proton acceptor; for ring-opening step in the catalytic mechanism. Glu135 (for ring-opening step) is an active-site residue.

This sequence belongs to the glucosamine/galactosamine-6-phosphate isomerase family. NagB subfamily.

It catalyses the reaction alpha-D-glucosamine 6-phosphate + H2O = beta-D-fructose 6-phosphate + NH4(+). The protein operates within amino-sugar metabolism; N-acetylneuraminate degradation; D-fructose 6-phosphate from N-acetylneuraminate: step 5/5. Catalyzes the reversible isomerization-deamination of glucosamine 6-phosphate (GlcN6P) to form fructose 6-phosphate (Fru6P) and ammonium ion. The sequence is that of Glucosamine-6-phosphate deaminase from Lactobacillus helveticus (strain DPC 4571).